A 385-amino-acid polypeptide reads, in one-letter code: S-adenosylmethionine synthase (385 aa).

Position 16 (H16) interacts with ATP. D18 provides a ligand contact to Mg(2+). Residue E44 participates in K(+) binding. Residues E57 and Q100 each contribute to the L-methionine site. A flexible loop region spans residues 100-110 (QSPDINQGVDR). ATP is bound by residues 164 to 166 (DGK), 230 to 231 (KF), D239, 245 to 246 (RK), A262, and K266. D239 lines the L-methionine pocket. K270 contacts L-methionine.

It belongs to the AdoMet synthase family. As to quaternary structure, homotetramer; dimer of dimers. Mg(2+) is required as a cofactor. The cofactor is K(+).

The protein resides in the cytoplasm. It catalyses the reaction L-methionine + ATP + H2O = S-adenosyl-L-methionine + phosphate + diphosphate. The protein operates within amino-acid biosynthesis; S-adenosyl-L-methionine biosynthesis; S-adenosyl-L-methionine from L-methionine: step 1/1. In terms of biological role, catalyzes the formation of S-adenosylmethionine (AdoMet) from methionine and ATP. The overall synthetic reaction is composed of two sequential steps, AdoMet formation and the subsequent tripolyphosphate hydrolysis which occurs prior to release of AdoMet from the enzyme. This chain is S-adenosylmethionine synthase, found in Helicobacter pylori (strain Shi470).